Consider the following 416-residue polypeptide: Serine hydroxymethyltransferase 1 (416 aa).

(6S)-5,6,7,8-tetrahydrofolate-binding positions include L121 and 125–127 (GHL). K229 carries the N6-(pyridoxal phosphate)lysine modification. Residues E245 and 354–356 (SPF) contribute to the (6S)-5,6,7,8-tetrahydrofolate site.

Belongs to the SHMT family. As to quaternary structure, homodimer. Pyridoxal 5'-phosphate serves as cofactor.

Its subcellular location is the cytoplasm. It carries out the reaction (6R)-5,10-methylene-5,6,7,8-tetrahydrofolate + glycine + H2O = (6S)-5,6,7,8-tetrahydrofolate + L-serine. It participates in one-carbon metabolism; tetrahydrofolate interconversion. It functions in the pathway amino-acid biosynthesis; glycine biosynthesis; glycine from L-serine: step 1/1. Its function is as follows. Catalyzes the reversible interconversion of serine and glycine with tetrahydrofolate (THF) serving as the one-carbon carrier. This reaction serves as the major source of one-carbon groups required for the biosynthesis of purines, thymidylate, methionine, and other important biomolecules. Also exhibits THF-independent aldolase activity toward beta-hydroxyamino acids, producing glycine and aldehydes, via a retro-aldol mechanism. This Photobacterium profundum (strain SS9) protein is Serine hydroxymethyltransferase 1.